We begin with the raw amino-acid sequence, 344 residues long: Glyceraldehyde-3-phosphate dehydrogenase (344 aa).

Residues 11 to 12 (TI) and glycine 110 contribute to the NAD(+) site. 139–141 (SCN) is a D-glyceraldehyde 3-phosphate binding site. The active-site Nucleophile is the cysteine 140. Arginine 169 contributes to the NAD(+) binding site. Residue 195 to 196 (HG) coordinates D-glyceraldehyde 3-phosphate. Glutamine 302 lines the NAD(+) pocket.

This sequence belongs to the glyceraldehyde-3-phosphate dehydrogenase family. In terms of assembly, homotetramer.

It localises to the cytoplasm. It carries out the reaction D-glyceraldehyde 3-phosphate + phosphate + NADP(+) = (2R)-3-phospho-glyceroyl phosphate + NADPH + H(+). The catalysed reaction is D-glyceraldehyde 3-phosphate + phosphate + NAD(+) = (2R)-3-phospho-glyceroyl phosphate + NADH + H(+). It functions in the pathway carbohydrate degradation; glycolysis; pyruvate from D-glyceraldehyde 3-phosphate: step 1/5. The protein is Glyceraldehyde-3-phosphate dehydrogenase of Pyrobaculum islandicum (strain DSM 4184 / JCM 9189 / GEO3).